The sequence spans 188 residues: Putative adenylate kinase (188 aa).

ATP contacts are provided by Gly-10, Gly-12, Lys-13, Ser-14, and Thr-15. The interval 30 to 53 (HVSSFLIQNKAFSEYDELRQSYVI) is NMP. The tract at residues 103–113 (RRGWGELKIAE) is LID. Residues Arg-104 and Lys-142 each coordinate ATP.

The protein belongs to the adenylate kinase family. AK6 subfamily. Interacts with uS11. Not a structural component of 40S pre-ribosomes, but transiently interacts with them by binding to uS11.

It carries out the reaction AMP + ATP = 2 ADP. The enzyme catalyses ATP + H2O = ADP + phosphate + H(+). Functionally, broad-specificity nucleoside monophosphate (NMP) kinase that catalyzes the reversible transfer of the terminal phosphate group between nucleoside triphosphates and monophosphates. Also has ATPase activity. Involved in the late maturation steps of the 30S ribosomal particles, specifically 16S rRNA maturation. While NMP activity is not required for ribosome maturation, ATPase activity is. Associates transiently with small ribosomal subunit protein uS11. ATP hydrolysis breaks the interaction with uS11. May temporarily remove uS11 from the ribosome to enable a conformational change of the ribosomal RNA that is needed for the final maturation step of the small ribosomal subunit. The polypeptide is Putative adenylate kinase (Sulfurisphaera tokodaii (strain DSM 16993 / JCM 10545 / NBRC 100140 / 7) (Sulfolobus tokodaii)).